Reading from the N-terminus, the 304-residue chain is Undecaprenyl-diphosphatase (304 aa).

Transmembrane regions (helical) follow at residues 1 to 21, 54 to 74, 90 to 110, 114 to 134, 192 to 212, 225 to 245, and 253 to 273; these read MSLL…FLPV, TTLA…AAGL, LAWF…LFEE, ALGN…LLAA, FLLS…KTVP, LVGT…LLGW, and LFVV…WQGV.

It belongs to the UppP family.

It localises to the cell inner membrane. The enzyme catalyses di-trans,octa-cis-undecaprenyl diphosphate + H2O = di-trans,octa-cis-undecaprenyl phosphate + phosphate + H(+). Its function is as follows. Catalyzes the dephosphorylation of undecaprenyl diphosphate (UPP). Confers resistance to bacitracin. The polypeptide is Undecaprenyl-diphosphatase (Anaeromyxobacter sp. (strain Fw109-5)).